Here is a 67-residue protein sequence, read N- to C-terminus: Conotoxin Cal12.1p2 (67 aa).

The propeptide occupies 1-21 (DLITNSYTRGKPRHVTSWRNL).

Contains 4 disulfide bonds. Expressed by the venom duct.

It localises to the secreted. The protein is Conotoxin Cal12.1p2 of Californiconus californicus (California cone).